Here is a 171-residue protein sequence, read N- to C-terminus: Spiderine-2a (171 aa).

The N-terminal stretch at 1 to 18 (MKFALVLLGVCAFYLVNA) is a signal peptide. A propeptide spans 19-58 (TGDLETELEASELQELQEALDLIAETPLESLEAEELEEAR) (removed in mature form). The segment at 59–104 (KFKLPKINWGKLASKAKDVYKKGQKLAKNKNVKKALKYGKQLAENL) is linear cationic cytotoxin domain. The Oxytoxin-type inhibitor cystine knot (ICK) domain occupies 118–171 (NNKCWAIGTRCTDDCDCCPEHHCHCPAKSWTFGLIPCSCQVTESDKVNKCPPAE). Cystine bridges form between C121-C135, C128-C140, C132-C167, C134-C156, and C142-C154.

Disulfide bonds. Expressed by the venom gland.

The protein localises to the secreted. In terms of biological role, has antimicrobial, insecticidal, cytolytic and cytotoxic activity. The polypeptide is Spiderine-2a (Oxyopes takobius (Lynx spider)).